Here is a 577-residue protein sequence, read N- to C-terminus: E3 ubiquitin-protein ligase MSL2 (577 aa).

Positions 1–116 (MNPVNATALY…CEYITQTTLA (116 aa)) are sufficient for interaction with MSL1. Positions 44, 47, 62, 64, 67, 70, 81, and 84 each coordinate Zn(2+). An RING-type zinc finger spans residues 44-85 (CCVCGHLLQDPIAPTNSTCQHYVCKTCKGKKMMMKPSCSWCK). Residue K375 forms a Glycyl lysine isopeptide (Lys-Gly) (interchain with G-Cter in SUMO2) linkage. Residues 405–427 (TKSMKKSHEHGSKKSHSKTKPGI) form a disordered region. Positions 407 to 423 (SMKKSHEHGSKKSHSKT) are enriched in basic residues. S447 is subject to Phosphoserine. A CXC MSL2-type domain is found at 457–508 (QEKKGCKCGRATQNPSVLTCRGQRCPCYSNRKACLDCICRGCQNSYMANGEK). Residues C462, C464, C476, C481, C483, C490, C493, C495, and C498 each coordinate Zn(2+).

The protein belongs to the MSL2 family. As to quaternary structure, component of a multisubunit histone acetyltransferase complex (MSL) at least composed of the KAT8/MOF/MYST1, MSL1/hampin, MSL2 and MSL3. Forms a MSL heterotetrameric core with MSL1.

The protein localises to the nucleus. Its subcellular location is the chromosome. It carries out the reaction S-ubiquitinyl-[E2 ubiquitin-conjugating enzyme]-L-cysteine + [acceptor protein]-L-lysine = [E2 ubiquitin-conjugating enzyme]-L-cysteine + N(6)-ubiquitinyl-[acceptor protein]-L-lysine.. The protein operates within protein modification; protein ubiquitination. In terms of biological role, non-catalytic component of the MSL histone acetyltransferase complex, a multiprotein complex that mediates the majority of histone H4 acetylation at 'Lys-16' (H4K16ac), an epigenetic mark that prevents chromatin compaction. The MSL complex is required for chromosome stability and genome integrity by maintaining homeostatic levels of H4K16ac. The MSL complex is also involved in gene dosage by promoting up-regulation of genes expressed by the X chromosome. X up-regulation is required to compensate for autosomal biallelic expression. The MSL complex also participates in gene dosage compensation by promoting expression of Tsix non-coding RNA. MSL2 plays a key role in gene dosage by ensuring biallelic expression of a subset of dosage-sensitive genes, including many haploinsufficient genes. Acts by promoting promoter-enhancer contacts, thereby preventing DNA methylation of one allele and creating a methylation-free environment for methylation-sensitive transcription factors such as SP1, KANSL1 and KANSL3. Also acts as an E3 ubiquitin ligase that promotes monoubiquitination of histone H2B at 'Lys-35' (H2BK34Ub), but not that of H2A. This activity is greatly enhanced by heterodimerization with MSL1. H2B ubiquitination in turn stimulates histone H3 methylation at 'Lys-4' (H3K4me) and 'Lys-79' (H3K79me) and leads to gene activation, including that of HOXA9 and MEIS1. Also involved in the DNA damage response by mediating ubiquitination of TP53/p53 and TP53BP1. This chain is E3 ubiquitin-protein ligase MSL2, found in Homo sapiens (Human).